We begin with the raw amino-acid sequence, 126 residues long: Holo-[acyl-carrier-protein] synthase (126 aa).

Positions 9 and 58 each coordinate Mg(2+).

Belongs to the P-Pant transferase superfamily. AcpS family. Mg(2+) serves as cofactor.

Its subcellular location is the cytoplasm. The enzyme catalyses apo-[ACP] + CoA = holo-[ACP] + adenosine 3',5'-bisphosphate + H(+). Its function is as follows. Transfers the 4'-phosphopantetheine moiety from coenzyme A to a Ser of acyl-carrier-protein. This Escherichia fergusonii (strain ATCC 35469 / DSM 13698 / CCUG 18766 / IAM 14443 / JCM 21226 / LMG 7866 / NBRC 102419 / NCTC 12128 / CDC 0568-73) protein is Holo-[acyl-carrier-protein] synthase.